Consider the following 419-residue polypeptide: UDP-N-acetylglucosamine 1-carboxyvinyltransferase (419 aa).

A phosphoenolpyruvate-binding site is contributed by 22 to 23; the sequence is KN. Arginine 93 provides a ligand contact to UDP-N-acetyl-alpha-D-glucosamine. Residue cysteine 117 is the Proton donor of the active site. Residue cysteine 117 is modified to 2-(S-cysteinyl)pyruvic acid O-phosphothioketal. 2 residues coordinate UDP-N-acetyl-alpha-D-glucosamine: aspartate 307 and isoleucine 329.

This sequence belongs to the EPSP synthase family. MurA subfamily.

It is found in the cytoplasm. It carries out the reaction phosphoenolpyruvate + UDP-N-acetyl-alpha-D-glucosamine = UDP-N-acetyl-3-O-(1-carboxyvinyl)-alpha-D-glucosamine + phosphate. The protein operates within cell wall biogenesis; peptidoglycan biosynthesis. In terms of biological role, cell wall formation. Adds enolpyruvyl to UDP-N-acetylglucosamine. This Pseudoalteromonas atlantica (strain T6c / ATCC BAA-1087) protein is UDP-N-acetylglucosamine 1-carboxyvinyltransferase.